A 106-amino-acid polypeptide reads, in one-letter code: MIISTTSQLEGRPIAEYLGVVSSESVQGINFVRDFFARFRDFFGGRSQTLEGALRLAREQATEELKARARQLQADAVVGVDFEISMPSVQGGMVVVFATGTAVRLK.

Belongs to the UPF0145 family.

This is UPF0145 protein PputW619_2377 from Pseudomonas putida (strain W619).